Here is a 99-residue protein sequence, read N- to C-terminus: NADH-quinone oxidoreductase subunit K (99 aa).

3 helical membrane passes run Pro3–Val23, Ile28–Phe48, and Phe62–Ile82.

It belongs to the complex I subunit 4L family. As to quaternary structure, NDH-1 is composed of 14 different subunits. Subunits NuoA, H, J, K, L, M, N constitute the membrane sector of the complex.

Its subcellular location is the cell membrane. It carries out the reaction a quinone + NADH + 5 H(+)(in) = a quinol + NAD(+) + 4 H(+)(out). Its function is as follows. NDH-1 shuttles electrons from NADH, via FMN and iron-sulfur (Fe-S) centers, to quinones in the respiratory chain. The immediate electron acceptor for the enzyme in this species is believed to be a menaquinone. Couples the redox reaction to proton translocation (for every two electrons transferred, four hydrogen ions are translocated across the cytoplasmic membrane), and thus conserves the redox energy in a proton gradient. The sequence is that of NADH-quinone oxidoreductase subunit K from Parafrankia sp. (strain EAN1pec).